Reading from the N-terminus, the 77-residue chain is Defensin-like protein 159 (77 aa).

Positions 1-27 are cleaved as a signal peptide; that stretch reads MAKLSCSYFLVLILVFSAFLMVERAEG. Intrachain disulfides connect cysteine 30-cysteine 77, cysteine 40-cysteine 59, cysteine 45-cysteine 71, and cysteine 49-cysteine 73.

The protein belongs to the DEFL family.

Its subcellular location is the secreted. In Arabidopsis thaliana (Mouse-ear cress), this protein is Defensin-like protein 159 (LCR25).